Reading from the N-terminus, the 284-residue chain is 4-hydroxybenzoate octaprenyltransferase (284 aa).

Transmembrane regions (helical) follow at residues Phe-13 to Leu-32, Ala-90 to Leu-110, Thr-112 to Tyr-132, His-134 to Ala-154, Leu-164 to Met-184, Ile-200 to Leu-220, and Ile-224 to Leu-244.

It belongs to the UbiA prenyltransferase family. Mg(2+) is required as a cofactor.

It localises to the cell inner membrane. The enzyme catalyses all-trans-octaprenyl diphosphate + 4-hydroxybenzoate = 4-hydroxy-3-(all-trans-octaprenyl)benzoate + diphosphate. It functions in the pathway cofactor biosynthesis; ubiquinone biosynthesis. Catalyzes the prenylation of para-hydroxybenzoate (PHB) with an all-trans polyprenyl group. Mediates the second step in the final reaction sequence of ubiquinone-8 (UQ-8) biosynthesis, which is the condensation of the polyisoprenoid side chain with PHB, generating the first membrane-bound Q intermediate 3-octaprenyl-4-hydroxybenzoate. In Marinomonas sp. (strain MWYL1), this protein is 4-hydroxybenzoate octaprenyltransferase.